The following is a 117-amino-acid chain: Hemerythrin subunit alpha (117 aa).

Fe cation is bound by residues histidine 24, histidine 53, glutamate 57, histidine 72, histidine 76, histidine 105, and aspartate 110.

It belongs to the hemerythrin family. As to quaternary structure, octamer composed of two types of chains: alpha and beta.

Its function is as follows. Hemerythrin is a respiratory protein in blood cells of certain marine worms. The oxygen-binding site in each chain contains two iron atoms. This is Hemerythrin subunit alpha from Lingula reevii (Inarticulated brachiopod).